Here is a 57-residue protein sequence, read N- to C-terminus: Large ribosomal subunit protein bL32B (57 aa).

The protein belongs to the bacterial ribosomal protein bL32 family.

The protein is Large ribosomal subunit protein bL32B of Listeria welshimeri serovar 6b (strain ATCC 35897 / DSM 20650 / CCUG 15529 / CIP 8149 / NCTC 11857 / SLCC 5334 / V8).